A 114-amino-acid chain; its full sequence is PDZK1-interacting protein 1 (114 aa).

Residues 1-28 (MSALSLVILGLLMAVPPASCQQGLGNLQ) lie on the Extracellular side of the membrane. A helical transmembrane segment spans residues 29-51 (PWMQGLIAVAVFLVLVAIAFAIN). The Cytoplasmic portion of the chain corresponds to 52–114 (HFWCQEEREP…EEGRVHSTPM (63 aa)). The residue at position 85 (S85) is a Phosphoserine. Residues 92–114 (SNEHENAYENTSEEEGRVHSTPM) form a disordered region. Basic and acidic residues predominate over residues 105 to 114 (EEGRVHSTPM).

This sequence belongs to the PDZK1-interacting protein 1/SMIM24 family. In terms of assembly, forms a heterodimer (via N-terminal transmembrane helix) with SLC5A2/SGLT2 (via TM13); this interaction enhances SLC5A2 transporter activity. Interacts with PDZK1.

Its subcellular location is the apical cell membrane. In terms of biological role, auxiliary protein of electrogenic Na(+)-coupled sugar symporter SLC5A2/SGLT2 and SLC5A1/SGLT1. Essential for the transporter activity of SLC5A2/SGLT2 but not SLC5A1/SGLT1. In Sus scrofa (Pig), this protein is PDZK1-interacting protein 1.